Consider the following 130-residue polypeptide: Small ribosomal subunit protein uS8 (130 aa).

It belongs to the universal ribosomal protein uS8 family. In terms of assembly, part of the 30S ribosomal subunit. Contacts proteins S5 and S12.

Functionally, one of the primary rRNA binding proteins, it binds directly to 16S rRNA central domain where it helps coordinate assembly of the platform of the 30S subunit. The sequence is that of Small ribosomal subunit protein uS8 from Pectobacterium atrosepticum (strain SCRI 1043 / ATCC BAA-672) (Erwinia carotovora subsp. atroseptica).